We begin with the raw amino-acid sequence, 152 residues long: Atypical leghemoglobin 2-1 (152 aa).

A Globin domain is found at 3-152 (TFSEEQEALV…LAGVIKKGMS (150 aa)). Tyr31 is modified (nitrated tyrosine). A heme b-binding site is contributed by Ser46. Residue Ser46 is modified to Phosphoserine. An O2-binding site is contributed by His64. The heme b site is built by Lys67, His99, and Arg102. At Tyr140 the chain carries Nitrated tyrosine.

The protein belongs to the plant globin family. Monomer. Nitrated in effective nodules and particularly in hypoxic conditions; this mechanism may play a protective role in the symbiosis by buffering toxic peroxynitrite NO(2)(-). Nitration level decrease during nodule senescence. In terms of processing, phosphorylation at Ser-46 disrupts the molecular environment of its porphyrin ring oxygen binding pocket, thus leading to a reduced oxygen consumption and to the delivery of oxygen O(2) to symbiosomes. In terms of tissue distribution, mainly expressed in leaves and, at low levels, in roots of non-nodulated plants. However, accumulates also in nodules and roots, and, to a lower extent, in leaves, stems, flowers and fruits, in nodulated plants.

Its function is as follows. Atypical leghemoglobin that reversibly binds oxygen O(2) through a pentacoordinated heme iron. In nodules, facilitates the diffusion of oxygen to the bacteroids while preventing the bacterial nitrogenase from being inactivated by buffering dioxygen, nitric oxide and carbon monoxide. This role is essential for symbiotic nitrogen fixation (SNF). Seems not restricted to symbiotic nitrogen fixation and root nodules formation, but also contributes to general plant development and metabolism. In Lotus japonicus (Lotus corniculatus var. japonicus), this protein is Atypical leghemoglobin 2-1.